The following is a 128-amino-acid chain: Ig kappa chain V-V region T1 (128 aa).

The N-terminal stretch at 1 to 20 (MRTPAQFLGILLLWFPGIKC) is a signal peptide. Positions 21–43 (DIKMTQSPSSMYASLGERVTISC) are framework-1. Cysteine 43 and cysteine 108 form a disulfide bridge. Residues 44–54 (KASQDINSYLT) form a complementarity-determining-1 region. The framework-2 stretch occupies residues 55–69 (WFQQKPGKSPKTLLY). A complementarity-determining-2 region spans residues 70-76 (RANRLVD). Positions 77-108 (GVPSRFSGSGSGQDFSLTISSLEYEDMGIYYC) are framework-3. A complementarity-determining-3 region spans residues 109-117 (LQYDEFPLT). A framework-4 region spans residues 118-127 (FGAGTKLELK).

The sequence is that of Ig kappa chain V-V region T1 from Mus musculus (Mouse).